A 350-amino-acid chain; its full sequence is LIM domain-containing protein unc-95 (350 aa).

The segment covering 1 to 37 (MTISPQPSHQQFESYQWTTESRSSQQRHGTGTPSQDG) has biased composition (polar residues). The disordered stretch occupies residues 1–65 (MTISPQPSHQ…ESRNSNKDKV (65 aa)). Over residues 45–65 (PVERHVARWRSESRNSNKDKV) the composition is skewed to basic and acidic residues. Residues 83-110 (LTALKNDVEQTTEIIRRKQEQMRMERRQ) adopt a coiled-coil conformation. Disordered stretches follow at residues 177–198 (RRGQRGRDGEDGNKKKKEEIEY), 206–225 (PEEQIPQRPKIPEDDNMETD), and 235–262 (MSEETDSLRRRRARSTTPRRTLHISGSP). The LIM zinc-binding domain maps to 268–334 (AVCAYCSEEI…HDCFYKLYNG (67 aa)).

Post-translationally, ubiquitinated. Ubiquitination by rnf-5 leads to dissociation from muscle dense bodies during molting and is required for ecdysis. In terms of tissue distribution, expressed in the body wall muscles, vulval muscles and the anal muscles. Expressed in the muscle arms of the head muscle cells that form neuromuscular junctions and in the anal depressor muscle.

It is found in the cytoplasm. The protein resides in the nucleus. It localises to the cell membrane. The protein localises to the myofibril. Its subcellular location is the sarcomere. It is found in the m line. The protein resides in the cell junction. It localises to the focal adhesion. In terms of biological role, required for the assembly and integrity of muscle dense bodies, which establish the adhesion sites of the muscle cells to the extracellular matrix. Decreased localization of unc-95 to dense bodies and their subsequent dissociation plays an important role in ecdysis during molting. Involved in the organization of the muscle sarcomeric structure and thereby required for locomotion. The polypeptide is LIM domain-containing protein unc-95 (Caenorhabditis elegans).